A 197-amino-acid chain; its full sequence is Dehydrin DHN1 (197 aa).

The segment covering 1 to 14 (MSQYQNQYGAQTGM) has biased composition (polar residues). Disordered stretches follow at residues 1–86 (MSQY…GTNP) and 133–197 (GTEQ…CTGH). A run of 2 repeats spans residues 16 to 21 (DEYGNP) and 26 to 31 (DQYGNP). A 2 X approximate repeats region spans residues 16–31 (DEYGNPVNQVDQYGNP). The span at 74 to 83 (THTGGVGGYG) shows a compositional bias: gly residues. One copy of the 2-1 repeat lies at 126 to 133 (KIKEKIPG). A 2 X approximate repeats region spans residues 126-190 (KIKEKIPGTE…MDKIKEKLPG (65 aa)). Positions 144–160 (AGYGSTGYGASGGGIGN) are enriched in gly residues. Basic and acidic residues predominate over residues 165 to 188 (YVREEHRVDHGEKKGIMDKIKEKL). The 2-2 repeat unit spans residues 183–190 (KIKEKLPG).

The protein belongs to the plant dehydrin family. In terms of tissue distribution, shoots, roots, and cotyledon from dehydrating seedlings.

This Pisum sativum (Garden pea) protein is Dehydrin DHN1 (DHN1).